We begin with the raw amino-acid sequence, 233 residues long: Small heat shock protein hspF (233 aa).

The sHSP domain maps to 129 to 233 (IPLFTFFEPL…ILLITVNKFL (105 aa)).

Belongs to the small heat shock protein (HSP20) family.

This chain is Small heat shock protein hspF (hspF-1), found in Dictyostelium discoideum (Social amoeba).